The sequence spans 209 residues: Ribosomal RNA large subunit methyltransferase E (209 aa).

The S-adenosyl-L-methionine site is built by Gly63, Trp65, Asp83, Asp99, and Asp124. Residue Lys164 is the Proton acceptor of the active site.

It belongs to the class I-like SAM-binding methyltransferase superfamily. RNA methyltransferase RlmE family.

The protein localises to the cytoplasm. The enzyme catalyses uridine(2552) in 23S rRNA + S-adenosyl-L-methionine = 2'-O-methyluridine(2552) in 23S rRNA + S-adenosyl-L-homocysteine + H(+). Functionally, specifically methylates the uridine in position 2552 of 23S rRNA at the 2'-O position of the ribose in the fully assembled 50S ribosomal subunit. In Colwellia psychrerythraea (strain 34H / ATCC BAA-681) (Vibrio psychroerythus), this protein is Ribosomal RNA large subunit methyltransferase E.